The sequence spans 612 residues: Bifunctional lycopene cyclase/phytoene synthase (612 aa).

The segment at 1 to 268 is lycopene beta-cyclase; it reads MGWEYAQVHL…IVFGLIACDN (268 aa). Helical transmembrane passes span 3–23, 31–51, 112–130, 148–168, 171–191, 203–223, and 246–266; these read WEYA…LAAV, LDVF…VKGL, LFFF…MILS, IAGQ…VSSG, GMYM…LWSI, NTAL…TFAL, and IEEA…LIAC. Residues 275–612 form a phytoene synthase region; the sequence is TFPEHFPRTK…IRVAWSALNK (338 aa).

It in the N-terminal section; belongs to the lycopene beta-cyclase family. In the C-terminal section; belongs to the phytoene/squalene synthase family.

It is found in the membrane. The enzyme catalyses all-trans-lycopene = gamma-carotene. It carries out the reaction gamma-carotene = all-trans-beta-carotene. It catalyses the reaction 2 (2E,6E,10E)-geranylgeranyl diphosphate = 15-cis-phytoene + 2 diphosphate. Its pathway is carotenoid biosynthesis; beta-carotene biosynthesis. It participates in carotenoid biosynthesis; phytoene biosynthesis; all-trans-phytoene from geranylgeranyl diphosphate: step 1/1. Its function is as follows. Bifunctional enzyme; part of the car gene cluster that mediates the biosynthesis of neurosporaxanthin, a carboxylic apocarotenoid acting as an essential protective pigments and leading to orange pigmentation. CarAR catalyzes the first step of the pathway by converting geranylgeranyl diphosphate to phytoene, as well as the later cyclization step that transforms the carB product lycopene into gamma-carotene. CarAR also converts part of gamma-carotene into beta-carotene. Neurosporaxanthin is synthesized from geranyl-geranyl pyrophosphate (GGPP) through several enzymatic activities. Phytoene synthase activity performed by the bifunctional enzyme carAR first produces phytoene from geranyl-geranyl pyrophosphate (GGPP). The phytoene dehydrogenase carB then introduces 4 desaturations to lead to lycopene which is substrate of the carotene cyclase activity of carAR that leads to the production of gamma-carotene. CarB then performs a 5th desaturation reaction to yield torulene. Torulene is the substrate of the dioxidase carT that breaks the molecule, removing five carbon atoms to yield beta-apo-4'-carotenal, whereas the aldehyde dehydrogenase carD mediates the last step by converting beta-apo-4'-carotenal into neurosporaxanthin. This Fusarium fujikuroi (Bakanae and foot rot disease fungus) protein is Bifunctional lycopene cyclase/phytoene synthase.